The sequence spans 198 residues: ATP-dependent Clp protease proteolytic subunit (198 aa).

The Nucleophile role is filled by S98. Residue H123 is part of the active site.

It belongs to the peptidase S14 family. In terms of assembly, fourteen ClpP subunits assemble into 2 heptameric rings which stack back to back to give a disk-like structure with a central cavity, resembling the structure of eukaryotic proteasomes.

The protein localises to the cytoplasm. The enzyme catalyses Hydrolysis of proteins to small peptides in the presence of ATP and magnesium. alpha-casein is the usual test substrate. In the absence of ATP, only oligopeptides shorter than five residues are hydrolyzed (such as succinyl-Leu-Tyr-|-NHMec, and Leu-Tyr-Leu-|-Tyr-Trp, in which cleavage of the -Tyr-|-Leu- and -Tyr-|-Trp bonds also occurs).. In terms of biological role, cleaves peptides in various proteins in a process that requires ATP hydrolysis. Has a chymotrypsin-like activity. Plays a major role in the degradation of misfolded proteins. The protein is ATP-dependent Clp protease proteolytic subunit of Ehrlichia ruminantium (strain Welgevonden).